The sequence spans 316 residues: Ribosomal protein L11 methyltransferase (316 aa).

Residues T159, G179, D201, and N243 each contribute to the S-adenosyl-L-methionine site.

The protein belongs to the methyltransferase superfamily. PrmA family.

The protein localises to the cytoplasm. It carries out the reaction L-lysyl-[protein] + 3 S-adenosyl-L-methionine = N(6),N(6),N(6)-trimethyl-L-lysyl-[protein] + 3 S-adenosyl-L-homocysteine + 3 H(+). Methylates ribosomal protein L11. The chain is Ribosomal protein L11 methyltransferase from Gloeobacter violaceus (strain ATCC 29082 / PCC 7421).